The sequence spans 493 residues: MLKHGNLEYEIIIGCEIHCQLLTKTKAFCSCENRYGGIPNTRVCPCCLGLPGALPRVSKEYVEFGIKAGHALGCRINNFSKFDRKHYFYPDLVKGYQITQFYTPLCEEGEVEVNLAAQNEEPKFKKIRIERIHLEEDVGKSLHIEGSHSYIDFNRSGVPLIEIVSKPDMSTPDEAAKYMQTIREILKFIGVTDGNMEEGALRCDANVNLKIIDNGVEFRTPISEIKNMNSFKAVKDACTYEVSRQLEEYNSKDRIAFKTGFKRTMGWDEPSGQTVVQRTKTIAEDYRFMPEPDLRALELSDKFIKEVSDSVGELPEAKRLRFKKEYHLSEFDVQTLTSERELAEWFEEAAKKSSSPKKCANWILAEVLAILNETNSSLSDLKFGPEAIAELVNVIEEGKITSKQAKDVFAEMIACGKKPSAVIAEKGMEQVSDSSFIEKIVEEVFAENAEAVQDWKNGKTNVAGWLMGQVMKKSGGKANPKQAADLVNKRLTE.

The tract at residues 473 to 493 (KSGGKANPKQAADLVNKRLTE) is disordered.

Belongs to the GatB/GatE family. GatB subfamily. As to quaternary structure, heterotrimer of A, B and C subunits.

The catalysed reaction is L-glutamyl-tRNA(Gln) + L-glutamine + ATP + H2O = L-glutaminyl-tRNA(Gln) + L-glutamate + ADP + phosphate + H(+). It carries out the reaction L-aspartyl-tRNA(Asn) + L-glutamine + ATP + H2O = L-asparaginyl-tRNA(Asn) + L-glutamate + ADP + phosphate + 2 H(+). Allows the formation of correctly charged Asn-tRNA(Asn) or Gln-tRNA(Gln) through the transamidation of misacylated Asp-tRNA(Asn) or Glu-tRNA(Gln) in organisms which lack either or both of asparaginyl-tRNA or glutaminyl-tRNA synthetases. The reaction takes place in the presence of glutamine and ATP through an activated phospho-Asp-tRNA(Asn) or phospho-Glu-tRNA(Gln). The polypeptide is Aspartyl/glutamyl-tRNA(Asn/Gln) amidotransferase subunit B (Treponema denticola (strain ATCC 35405 / DSM 14222 / CIP 103919 / JCM 8153 / KCTC 15104)).